The primary structure comprises 768 residues: MSPSAPANSAPDPDRNGVPDVGPASAAPPDLQTAAARAAWLRSTLQHHAHLYYVLDAPELPDAEYDRLFQELQAIEAMYPALRTADSPTQRVLGQVRDGFVVVRHAVPMLSIRTETDTEASGAVAFDARVRRELELPDDAPPISYATELKFDGLAINLRYEHGVLVQAATRGDGESGEDVTQNIRTIGQIPLRLRWAPTLGADAHSLPPEGARFALGRPGGETGAPDLAPAVLEVRGEVYMRRDDFEALNERQRERIARGDKGEKTFVNPRNAAAGAVRQLDPAIAAQRPLSFFAYGLGEVQGWALPHTHAGLLDALAAAGLPVCAERAVVQGADGLVAFHQRIGALRDSLAFDIDGVVYKVDSLALQQRLGFVTREPRWAVAHKYPAQEQMTRLLGIEIQVGRTGKLTPVARLEPVFVGGTTVSNATLHNEDEARRKDVRVGDTVIVRRAGDVIPQVVGVVLEQRPDDVGEPFDLYQRLGGRCPVCGSAIARPEGEADWRCTGGLFCAAQRKQAILHFASRRMMDIEGLGDKLVDQLVDAGVIRTLPELYKLGVAKLTALERMGEKSAVNLVAALEKSKQTTLARFLFSLGIRQVGEATAKALARHFGALDRVMDASVDQLQAVPDVGPIVALSIRTFFDQPHNREVVEQLRAAGIHWAEHEASAAADAAELPLAGKTLVLTGTLPTLGRDAAKDLIEAAGGKVSGSVSKKTHFVVAGAEAGSKLDKARELGLVILDEAGLLALLNEAEADADADAEGLPDSPVAPT.

The span at 1–11 (MSPSAPANSAP) shows a compositional bias: low complexity. The disordered stretch occupies residues 1–28 (MSPSAPANSAPDPDRNGVPDVGPASAAP). NAD(+)-binding positions include 62 to 66 (DAEYD), 111 to 112 (SI), and E148. The active-site N6-AMP-lysine intermediate is K150. 4 residues coordinate NAD(+): R171, E238, K361, and K385. Zn(2+) contacts are provided by C484, C487, C502, and C508. Positions 670-759 (AAELPLAGKT…EADADADAEG (90 aa)) constitute a BRCT domain.

This sequence belongs to the NAD-dependent DNA ligase family. LigA subfamily. The cofactor is Mg(2+). Mn(2+) is required as a cofactor.

The enzyme catalyses NAD(+) + (deoxyribonucleotide)n-3'-hydroxyl + 5'-phospho-(deoxyribonucleotide)m = (deoxyribonucleotide)n+m + AMP + beta-nicotinamide D-nucleotide.. Functionally, DNA ligase that catalyzes the formation of phosphodiester linkages between 5'-phosphoryl and 3'-hydroxyl groups in double-stranded DNA using NAD as a coenzyme and as the energy source for the reaction. It is essential for DNA replication and repair of damaged DNA. This is DNA ligase from Leptothrix cholodnii (strain ATCC 51168 / LMG 8142 / SP-6) (Leptothrix discophora (strain SP-6)).